The sequence spans 828 residues: Glycerol-3-phosphate acyltransferase 1, mitochondrial (828 aa).

The Cytoplasmic segment spans residues 1–87 (MDESALTLGT…FFNPSIPSLG (87 aa)). The segment at 80-120 (NPSIPSLGLRNVIYINETHTRHRGWLARRLSYVLFIQERDV) is important for mitochondrial localization. The stretch at 88 to 118 (LRNVIYINETHTRHRGWLARRLSYVLFIQER) is an intramembrane region. The Cytoplasmic portion of the chain corresponds to 119–828 (DVHKGMFATN…LEYILSFVVL (710 aa)). An HXXXXD motif motif is present at residues 230–235 (HRSHID). Residues R278, R279, K288, R293, and R328 each coordinate CoA. Residue S380 is modified to Phosphoserine. A disordered region spans residues 435–455 (SRPSDAADEGRDTSINESRNA). The segment covering 442–455 (DEGRDTSINESRNA) has biased composition (basic and acidic residues). R462 serves as a coordination point for CoA. Phosphoserine occurs at positions 688 and 695. N6-acetyllysine is present on residues K780 and K784.

It belongs to the GPAT/DAPAT family.

It is found in the mitochondrion outer membrane. The enzyme catalyses sn-glycerol 3-phosphate + an acyl-CoA = a 1-acyl-sn-glycero-3-phosphate + CoA. It carries out the reaction (9Z,12Z)-octadecadienoyl-CoA + sn-glycerol 3-phosphate = 1-(9Z,12Z)-octadecadienoyl-sn-glycero-3-phosphate + CoA. The catalysed reaction is sn-glycerol 3-phosphate + (9Z)-octadecenoyl-CoA = 1-(9Z-octadecenoyl)-sn-glycero-3-phosphate + CoA. It catalyses the reaction sn-glycerol 3-phosphate + octadecanoyl-CoA = 1-octadecanoyl-sn-glycero-3-phosphate + CoA. The enzyme catalyses sn-glycerol 3-phosphate + hexadecanoyl-CoA = 1-hexadecanoyl-sn-glycero-3-phosphate + CoA. It carries out the reaction dodecanoyl-CoA + sn-glycerol 3-phosphate = 1-dodecanoyl-sn-glycerol 3-phosphate + CoA. The catalysed reaction is 1-acyl-sn-glycero-3-phospho-(1'-sn-glycerol) + an acyl-CoA = a 1,2-diacyl-sn-glycero-3-phospho-(1'-sn-glycerol) + CoA. Its pathway is phospholipid metabolism; CDP-diacylglycerol biosynthesis; CDP-diacylglycerol from sn-glycerol 3-phosphate: step 1/3. Mitochondrial membrane protein that catalyzes the essential first step of biosynthesis of glycerolipids such as triglycerides, phosphatidic acids and lysophosphatidic acids. Esterifies acyl-group from acyl-coenzyme A (acyl-CoA) to the sn-1 position of glycerol-3-phosphate, to produce lysophosphatidic acid. Has a narrow hydrophobic binding cleft that selects for a linear acyl chain. Catalytic activity is higher for substrates with a 16-carbon acyl chain. The sequence is that of Glycerol-3-phosphate acyltransferase 1, mitochondrial from Homo sapiens (Human).